The chain runs to 136 residues: Inner membrane protein YbhQ (136 aa).

Residues 1–12 (MKWQQRVRVATG) are Cytoplasmic-facing. A helical transmembrane segment spans residues 13–33 (LSCWQIMLHLLVVALLVVGWM). Topologically, residues 34-37 (SKTL) are periplasmic. Residues 38 to 58 (VHVGVGLCALYCVTVVMMLVF) traverse the membrane as a helical segment. Topologically, residues 59 to 71 (QRHPEQRWREVAD) are cytoplasmic. The chain crosses the membrane as a helical span at residues 72-92 (VLEELTTTWYFGAALIVLWLL). At 93-99 (SRVLENN) the chain is on the periplasmic side. Residues 100–120 (FLLAIAGLAILAGPAVVSLLA) traverse the membrane as a helical segment. Topologically, residues 121–136 (KDKKLHHLTSKHRVRR) are cytoplasmic.

The protein resides in the cell inner membrane. This is Inner membrane protein YbhQ (ybhQ) from Escherichia coli O157:H7.